We begin with the raw amino-acid sequence, 469 residues long: 3-isopropylmalate dehydratase large subunit (469 aa).

[4Fe-4S] cluster is bound by residues C350, C410, and C413.

Belongs to the aconitase/IPM isomerase family. LeuC type 1 subfamily. As to quaternary structure, heterodimer of LeuC and LeuD. [4Fe-4S] cluster is required as a cofactor.

It carries out the reaction (2R,3S)-3-isopropylmalate = (2S)-2-isopropylmalate. The protein operates within amino-acid biosynthesis; L-leucine biosynthesis; L-leucine from 3-methyl-2-oxobutanoate: step 2/4. Functionally, catalyzes the isomerization between 2-isopropylmalate and 3-isopropylmalate, via the formation of 2-isopropylmaleate. The chain is 3-isopropylmalate dehydratase large subunit from Brucella abortus (strain S19).